Reading from the N-terminus, the 1105-residue chain is Carbamoyl phosphate synthase large chain (1105 aa).

The interval 1–402 is carboxyphosphate synthetic domain; it reads MPKRDDIEKV…ALGKAVRSLE (402 aa). Positions 129, 169, 175, 176, 208, 210, 215, 241, 242, 243, 285, and 299 each coordinate ATP. One can recognise an ATP-grasp 1 domain in the interval 133-328; the sequence is KTAMKNCGLE…IAKISALLAV (196 aa). 3 residues coordinate Mg(2+): Q285, E299, and N301. Q285, E299, and N301 together coordinate Mn(2+). Residues 403–542 are oligomerization domain; that stretch reads LDIAPKLDLR…STYNGMENET (140 aa). Residues 543–945 are carbamoyl phosphate synthetic domain; it reads IPSKRRKIMV…AFAKAQLSAD (403 aa). The 192-residue stretch at 667–858 folds into the ATP-grasp 2 domain; sequence AKFLKQSGLS…VAKIAAKTII (192 aa). ATP contacts are provided by R703, K742, L744, E749, G774, I775, H776, S777, Q817, and E829. Residues Q817, E829, and N831 each contribute to the Mg(2+) site. Residues Q817, E829, and N831 each contribute to the Mn(2+) site. The region spanning 940–1101 is the MGS-like domain; that stretch reads AQLSADGIST…QDIFYAQQNT (162 aa). The segment at 946 to 1105 is allosteric domain; it reads GISTKSLLVT…YAQQNTLLKK (160 aa).

The protein belongs to the CarB family. Composed of two chains; the small (or glutamine) chain promotes the hydrolysis of glutamine to ammonia, which is used by the large (or ammonia) chain to synthesize carbamoyl phosphate. Tetramer of heterodimers (alpha,beta)4. It depends on Mg(2+) as a cofactor. Mn(2+) is required as a cofactor.

It catalyses the reaction hydrogencarbonate + L-glutamine + 2 ATP + H2O = carbamoyl phosphate + L-glutamate + 2 ADP + phosphate + 2 H(+). The enzyme catalyses hydrogencarbonate + NH4(+) + 2 ATP = carbamoyl phosphate + 2 ADP + phosphate + 2 H(+). It participates in amino-acid biosynthesis; L-arginine biosynthesis; carbamoyl phosphate from bicarbonate: step 1/1. It functions in the pathway pyrimidine metabolism; UMP biosynthesis via de novo pathway; (S)-dihydroorotate from bicarbonate: step 1/3. In terms of biological role, large subunit of the glutamine-dependent carbamoyl phosphate synthetase (CPSase). CPSase catalyzes the formation of carbamoyl phosphate from the ammonia moiety of glutamine, carbonate, and phosphate donated by ATP, constituting the first step of 2 biosynthetic pathways, one leading to arginine and/or urea and the other to pyrimidine nucleotides. The large subunit (synthetase) binds the substrates ammonia (free or transferred from glutamine from the small subunit), hydrogencarbonate and ATP and carries out an ATP-coupled ligase reaction, activating hydrogencarbonate by forming carboxy phosphate which reacts with ammonia to form carbamoyl phosphate. The sequence is that of Carbamoyl phosphate synthase large chain from Pseudothermotoga lettingae (strain ATCC BAA-301 / DSM 14385 / NBRC 107922 / TMO) (Thermotoga lettingae).